A 93-amino-acid chain; its full sequence is PqqA binding protein (93 aa).

It belongs to the PqqD family. As to quaternary structure, monomer. Interacts with PqqE.

It functions in the pathway cofactor biosynthesis; pyrroloquinoline quinone biosynthesis. In terms of biological role, functions as a PqqA binding protein and presents PqqA to PqqE, in the pyrroloquinoline quinone (PQQ) biosynthetic pathway. The chain is PqqA binding protein from Methylococcus capsulatus (strain ATCC 33009 / NCIMB 11132 / Bath).